The following is a 323-amino-acid chain: Glutathione synthetase (323 aa).

An ATP-grasp domain is found at 133–317; sequence KMYALQFQSV…IGDQTIAALE (185 aa). 159-215 is a binding site for ATP; sequence LDELRAAVLKPLGGKAGEGILFLDPGDRNFNSLVEISTQQGQLPVMVQQYLPEAKDG. Mg(2+) is bound by residues Glu-288 and Asn-290.

Belongs to the prokaryotic GSH synthase family. The cofactor is Mg(2+). Mn(2+) is required as a cofactor.

The catalysed reaction is gamma-L-glutamyl-L-cysteine + glycine + ATP = glutathione + ADP + phosphate + H(+). Its pathway is sulfur metabolism; glutathione biosynthesis; glutathione from L-cysteine and L-glutamate: step 2/2. The protein is Glutathione synthetase of Synechococcus elongatus (strain ATCC 33912 / PCC 7942 / FACHB-805) (Anacystis nidulans R2).